A 428-amino-acid chain; its full sequence is Putative heme-binding peroxidase (428 aa).

A disordered region spans residues 1-33 (MTAIQKPVVAKREAPKAEVNPTVSRSTQTETIK). A compositionally biased stretch (polar residues) spans 21-32 (PTVSRSTQTETI). Histidine 188 acts as the Proton acceptor in catalysis. Residue histidine 312 participates in heme b binding. Catalysis depends on tryptophan 328, which acts as the Tryptophan radical intermediate.

The protein belongs to the peroxidase family. Cytochrome c peroxidase subfamily. It depends on heme b as a cofactor.

Its function is as follows. Destroys radicals which are normally produced within the cells and which are toxic to biological systems. This Debaryomyces hansenii (strain ATCC 36239 / CBS 767 / BCRC 21394 / JCM 1990 / NBRC 0083 / IGC 2968) (Yeast) protein is Putative heme-binding peroxidase.